We begin with the raw amino-acid sequence, 366 residues long: Putative neutrophil cytosol factor 1C (366 aa).

The PX domain maps to Met-1–Leu-101. 2 consecutive SH3 domains span residues Ile-132–Ser-191 and Tyr-202–Gln-261. The segment at Gln-261–Val-366 is disordered. Ser-279 and Ser-280 each carry phosphoserine. The span at His-285–Arg-294 shows a compositional bias: basic residues. Ser-296, Ser-304, Ser-321, and Ser-324 each carry phosphoserine.

It is found in the cytoplasm. May be required for activation of the latent NADPH oxidase (necessary for superoxide production). This Homo sapiens (Human) protein is Putative neutrophil cytosol factor 1C (NCF1C).